The primary structure comprises 436 residues: UDP-N-acetylmuramate--L-alanine ligase (436 aa).

Residue 108-114 (GAHGKTS) participates in ATP binding.

This sequence belongs to the MurCDEF family.

It is found in the cytoplasm. It carries out the reaction UDP-N-acetyl-alpha-D-muramate + L-alanine + ATP = UDP-N-acetyl-alpha-D-muramoyl-L-alanine + ADP + phosphate + H(+). The protein operates within cell wall biogenesis; peptidoglycan biosynthesis. Cell wall formation. The sequence is that of UDP-N-acetylmuramate--L-alanine ligase from Bacillus cereus (strain Q1).